Reading from the N-terminus, the 1172-residue chain is Lysylphosphatidylglycerol biosynthesis bifunctional protein LysX (1172 aa).

Residues 1–34 form a disordered region; it reads MGLHLTVPGLRRDGRGVQSNSHDTSSKTTADISR. The segment at 1–663 is phosphatidylglycerol lysyltransferase; the sequence is MGLHLTVPGL…LLHHDGSAPD (663 aa). Residues 17–31 are compositionally biased toward polar residues; the sequence is VQSNSHDTSSKTTAD. Helical transmembrane passes span 80 to 100, 122 to 142, 146 to 166, 177 to 197, 214 to 234, 272 to 292, and 612 to 632; these read VPAA…LASV, FPDT…ALTA, IAWL…AAEI, FGEN…VLGY, AVWL…VELF, AIFG…LFLS, and VIPR…LPFS. The segment at 664-1172 is lysine--tRNA ligase; sequence VSGLRQVGLT…TLPFPLAKPH (509 aa). Positions 726–804 form a DNA-binding region, OB; that stretch reads VSVSGRIMRI…SLIVSGWRLI (79 aa). D1084 and E1091 together coordinate Mg(2+).

The protein in the N-terminal section; belongs to the LPG synthetase family. It in the C-terminal section; belongs to the class-II aminoacyl-tRNA synthetase family. Requires Mg(2+) as cofactor.

The protein localises to the cell membrane. The enzyme catalyses tRNA(Lys) + L-lysine + ATP = L-lysyl-tRNA(Lys) + AMP + diphosphate. It catalyses the reaction L-lysyl-tRNA(Lys) + a 1,2-diacyl-sn-glycero-3-phospho-(1'-sn-glycerol) = a 1,2-diacyl-sn-glycero-3-phospho-1'-(3'-O-L-lysyl)-sn-glycerol + tRNA(Lys). Catalyzes the production of L-lysyl-tRNA(Lys)transfer and the transfer of a lysyl group from L-lysyl-tRNA(Lys) to membrane-bound phosphatidylglycerol (PG), which produces lysylphosphatidylglycerol (LPG), one of the components of the bacterial membrane with a positive net charge. LPG synthesis contributes to the resistance to cationic antimicrobial peptides (CAMPs) and likely protects M.tuberculosis against the CAMPs produced by competiting microorganisms (bacteriocins). In fact, the modification of anionic phosphatidylglycerol with positively charged L-lysine results in repulsion of the peptides. In Mycobacterium bovis (strain ATCC BAA-935 / AF2122/97), this protein is Lysylphosphatidylglycerol biosynthesis bifunctional protein LysX (lysX).